A 254-amino-acid polypeptide reads, in one-letter code: Low affinity immunoglobulin gamma Fc region receptor III-A (254 aa).

The first 20 residues, 1–20, serve as a signal peptide directing secretion; that stretch reads MWHLLPPSALLLLISSVTKA. Residues 21-209 are Extracellular-facing; sequence ADPSKAVVLL…IAPLFPLWQQ (189 aa). 2 Ig-like C2-type domains span residues 23–104 and 121–174; these read PSKA…VQLQ and KGES…YYCR. Residues asparagine 42, asparagine 63, asparagine 166, and asparagine 181 are each glycosylated (N-linked (GlcNAc...) asparagine). Intrachain disulfides connect cysteine 47–cysteine 90 and cysteine 129–cysteine 173. A helical transmembrane segment spans residues 210-230; that stretch reads IAFCLMMGLLFAVDTGLYFFV. At 231–254 the chain is on the cytoplasmic side; sequence RRDLRRSMVHKEEYNFKWSQAQDK.

In terms of assembly, forms a heterooligomeric complex with ITAM-containing signaling subunits FCER1G. Interacts (via transmembrane domain) with signaling subunits; this interaction is a prerequisite for receptor complex expression on the cell surface and intracellular signal transduction. Binds the Fc region of antigen-complexed IgG. N-glycosylated. Post-translationally, phosphorylated following receptor ligation.

The protein localises to the cell membrane. Functionally, receptor for the invariable Fc fragment of immunoglobulin gamma (IgG). Binds with intermediate affinity to both IgG2a and IgG2b. Can bind to IgG2a and IgG2b monomers. Does not display binding to IgG1 or IgG3. Recognizes neutralizing virus-specific IgGs displayed on the cell surface of infected cells and triggers antibody-dependent cellular cytotoxicity (ADCC). Confers protection to lethal influenza virus infection. On splenic dendritic cells, uptakes antigen immune complexes and efficiently divert them into MHC class I and II antigen presentation pathways to provide for superior priming of CD4-positive and CD8-positive T cell immune responses. Mediates neutrophil activation by IgG complexes redundantly with FCGR2A. Plays a role in promoting bone resorption by enhancing osteoclast differentiation following binding to IgG2a. Also acts as a receptor for the Fc region of immunoglobulin epsilon (IgE). Binds with low affinity to both the a and b allotypes of IgE. Has also been shown to bind to IgE allotype a only but not to allotype b. Binds aggregated IgE but not the monomeric form and bound monomeric IgG is readily displaced by IgE complexes. Binding to IgE promotes macrophage-mediated phagocytosis, antigen presentation to T cells, production of pro-inflammatory cytokines and the late phase of cutaneous allergic reactions. Mediates enhanced ADCC in response to afucosylated IgGs. The sequence is that of Low affinity immunoglobulin gamma Fc region receptor III-A from Cavia porcellus (Guinea pig).